Reading from the N-terminus, the 116-residue chain is Large ribosomal subunit protein bL20 (116 aa).

The protein belongs to the bacterial ribosomal protein bL20 family.

Its function is as follows. Binds directly to 23S ribosomal RNA and is necessary for the in vitro assembly process of the 50S ribosomal subunit. It is not involved in the protein synthesizing functions of that subunit. In Phocaeicola vulgatus (strain ATCC 8482 / DSM 1447 / JCM 5826 / CCUG 4940 / NBRC 14291 / NCTC 11154) (Bacteroides vulgatus), this protein is Large ribosomal subunit protein bL20.